The sequence spans 47 residues: PhoP/PhoQ regulator MgrB (47 aa).

A helical transmembrane segment spans residues 6–26; it reads WVVLGIVVVVCLLLWAQVFNI.

The protein belongs to the MgrB family. May form homooligomers. Probably interacts with the periplasmic domain of PhoQ.

It localises to the cell inner membrane. PhoP-regulated transcription is redox-sensitive, being activated when the periplasm becomes more reducing. MgrB acts between DsbA/DsbB and PhoP/PhoQ in this pathway. Represses PhoP/PhoQ signaling, possibly by binding to the periplasmic domain of PhoQ, altering its activity and that of downstream effector PhoP. This Salmonella gallinarum (strain 287/91 / NCTC 13346) protein is PhoP/PhoQ regulator MgrB.